A 458-amino-acid chain; its full sequence is UDP-N-acetylmuramoylalanine--D-glutamate ligase (458 aa).

124–130 contributes to the ATP binding site; the sequence is GSDGKTT.

This sequence belongs to the MurCDEF family.

It localises to the cytoplasm. It catalyses the reaction UDP-N-acetyl-alpha-D-muramoyl-L-alanine + D-glutamate + ATP = UDP-N-acetyl-alpha-D-muramoyl-L-alanyl-D-glutamate + ADP + phosphate + H(+). Its pathway is cell wall biogenesis; peptidoglycan biosynthesis. Its function is as follows. Cell wall formation. Catalyzes the addition of glutamate to the nucleotide precursor UDP-N-acetylmuramoyl-L-alanine (UMA). This Clostridium novyi (strain NT) protein is UDP-N-acetylmuramoylalanine--D-glutamate ligase.